The sequence spans 417 residues: Tryptophan synthase beta chain (417 aa).

K99 carries the post-translational modification N6-(pyridoxal phosphate)lysine.

This sequence belongs to the TrpB family. As to quaternary structure, tetramer of two alpha and two beta chains. Pyridoxal 5'-phosphate serves as cofactor.

The enzyme catalyses (1S,2R)-1-C-(indol-3-yl)glycerol 3-phosphate + L-serine = D-glyceraldehyde 3-phosphate + L-tryptophan + H2O. The protein operates within amino-acid biosynthesis; L-tryptophan biosynthesis; L-tryptophan from chorismate: step 5/5. In terms of biological role, the beta subunit is responsible for the synthesis of L-tryptophan from indole and L-serine. This Corynebacterium glutamicum (strain R) protein is Tryptophan synthase beta chain.